The following is a 130-amino-acid chain: ESAT-6 secretion system extracellular protein C (130 aa).

Belongs to the EsxC family.

The protein resides in the secreted. In Staphylococcus aureus (strain MSSA476), this protein is ESAT-6 secretion system extracellular protein C.